Consider the following 274-residue polypeptide: MNHQNLLSITRNLVHPPISSGLVLLSARELDKMRRVGQLAANLLNHLESMVQPGVSTQALNDEATRWMEDHGAISATLGYAPPGYPPFTGAICTSINEVVCHGIPNPKQILKDGDIINIDVTLRLAGYHGDTSRTFLVGSVSATARKLVEATQESMMRGIAEIKPGARIGDIGAAIQAYAEASGFSVVRDMVGHGIGRQMHTELQIPHYGKRGSGLKLRPGMVFTVEPMLNEGTYELTFLADGWTVITKDKKLSAQFEHTVVVTEEGVEILTLA.

Substrate is bound at residue H102. Positions 120, 131, and 194 each coordinate a divalent metal cation. H201 is a binding site for substrate. A divalent metal cation is bound by residues E227 and E258.

The protein belongs to the peptidase M24A family. Methionine aminopeptidase type 1 subfamily. Monomer. It depends on Co(2+) as a cofactor. The cofactor is Zn(2+). Mn(2+) serves as cofactor. Fe(2+) is required as a cofactor.

It catalyses the reaction Release of N-terminal amino acids, preferentially methionine, from peptides and arylamides.. Its function is as follows. Removes the N-terminal methionine from nascent proteins. The N-terminal methionine is often cleaved when the second residue in the primary sequence is small and uncharged (Met-Ala-, Cys, Gly, Pro, Ser, Thr, or Val). Requires deformylation of the N(alpha)-formylated initiator methionine before it can be hydrolyzed. The polypeptide is Methionine aminopeptidase B (Synechocystis sp. (strain ATCC 27184 / PCC 6803 / Kazusa)).